The following is a 211-amino-acid chain: Arginine exporter protein ArgO (211 aa).

Helical transmembrane passes span 1–21 (MFTY…PLGP), 37–57 (LMIA…GIFG), 68–88 (LLAL…FGAL), 111–131 (IIIT…DTFV), 147–167 (WFAL…ALLA), and 179–199 (AQRI…FQLA).

Belongs to the LysE/ArgO transporter (TC 2.A.75) family.

The protein resides in the cell inner membrane. The catalysed reaction is L-arginine(in) = L-arginine(out). In terms of biological role, involved in the export of arginine. Important to control the intracellular level of arginine and the correct balance between arginine and lysine. The polypeptide is Arginine exporter protein ArgO (Klebsiella pneumoniae subsp. pneumoniae (strain ATCC 700721 / MGH 78578)).